The following is a 449-amino-acid chain: Glucose-6-phosphate isomerase (449 aa).

E291 serves as the catalytic Proton donor. Active-site residues include H312 and K426.

This sequence belongs to the GPI family.

It is found in the cytoplasm. It carries out the reaction alpha-D-glucose 6-phosphate = beta-D-fructose 6-phosphate. It functions in the pathway carbohydrate biosynthesis; gluconeogenesis. It participates in carbohydrate degradation; glycolysis; D-glyceraldehyde 3-phosphate and glycerone phosphate from D-glucose: step 2/4. In terms of biological role, catalyzes the reversible isomerization of glucose-6-phosphate to fructose-6-phosphate. The chain is Glucose-6-phosphate isomerase from Clostridium botulinum (strain Eklund 17B / Type B).